The sequence spans 468 residues: Flavin-containing monooxygenase FMO GS-OX-like 1 (468 aa).

16 to 21 (GLGAAG) is an FAD binding site. Position 211–216 (211–216 (GSQASG)) interacts with NADP(+).

This sequence belongs to the FMO family. The cofactor is FAD.

Its function is as follows. Catalyzes the conversion of methylthioalkyl glucosinolates of any chain length into methylsulfinylalkyl glucosinolates. The chain is Flavin-containing monooxygenase FMO GS-OX-like 1 from Arabidopsis thaliana (Mouse-ear cress).